A 170-amino-acid chain; its full sequence is Peroxidase 2 (170 aa).

N-linked (GlcNAc...) asparagine glycosylation occurs at Asn-9. Residue His-24 coordinates heme b. Thr-25 provides a ligand contact to Ca(2+). A disulfide bridge connects residues Cys-31 and Cys-59. Residues Asp-73, Thr-76, and Asp-81 each coordinate Ca(2+).

The protein belongs to the peroxidase family. Classical plant (class III) peroxidase subfamily. Ca(2+) serves as cofactor. It depends on heme b as a cofactor.

The enzyme catalyses 2 a phenolic donor + H2O2 = 2 a phenolic radical donor + 2 H2O. Functionally, removal of H(2)O(2), oxidation of toxic reductants, biosynthesis and degradation of lignin, suberization, auxin catabolism, response to environmental stresses such as wounding, pathogen attack and oxidative stress. These functions might be dependent on each isozyme/isoform in each plant tissue. In terms of biological role, involved in defense response to powdery meldew fungus. This Hordeum vulgare (Barley) protein is Peroxidase 2.